The sequence spans 628 residues: MSKVIGIDLGTTNSCVAVYEGGEAKIIPNKEGKNTTPSIVAFTDKGEVLVGDPAKRQAITNPNKTISSIKRIMGLMMSEENAKAAHDKVTYNIVDKDGMAAVDVAGKIYTPQEISAKILSKLKEDAEAYIGSSVTDAVITVPAYFNDAQRKATKDAGTIAGLNVLRIINEPTASALAYGLESKSDENVLVYDLGGGTFDVTVLEISDGTFEVLSTDGNAFLGGDDFDNKIVDYLNAEFKSSHGIDLKNDKMALQRLKDAAENAKKELSSSTETEINLPFITMTEAGPQHLVLKLTRAKFESMIEKLVEETIAHIKTAMKESGLDNDAIKEIIMVGGSTRVPLAQEMVSKFFGGKKLNKGVNPDEVVAAGAAIQGGVLRGDVKDVLLLDVTPLSLGIETLGGVATKIIEKGTTIPVKKSQIFSTAEDNQPAVSISVVQGEREFARDNKSLGLFELGNIAAAPRGVPQIEVTFDIDANGILTVSSTDKGTGKSQSITISGSSGLSEEEINKMVKDAELHKAEDSKRKELVELKNQADALIAQTEKSIGEMGDKIEADEKAKIEAAITELKDVLKDTNATKEKIEPKVKTLTEASHKMAEQMYKGEQGAQGGAADTSKKKSDDDVIDAEIE.

T197 carries the post-translational modification Phosphothreonine; by autocatalysis. The interval 597–628 is disordered; that stretch reads EQMYKGEQGAQGGAADTSKKKSDDDVIDAEIE.

Belongs to the heat shock protein 70 family.

In terms of biological role, acts as a chaperone. The protein is Chaperone protein DnaK of Sulfurimonas denitrificans (strain ATCC 33889 / DSM 1251) (Thiomicrospira denitrificans (strain ATCC 33889 / DSM 1251)).